The following is a 47-amino-acid chain: Photosystem II reaction center protein K (47 aa).

Positions Met-1–Ala-10 are excised as a propeptide. The chain crosses the membrane as a helical span at residues Leu-26 to Phe-46.

It belongs to the PsbK family. As to quaternary structure, PSII is composed of 1 copy each of membrane proteins PsbA, PsbB, PsbC, PsbD, PsbE, PsbF, PsbH, PsbI, PsbJ, PsbK, PsbL, PsbM, PsbT, PsbX, PsbY, Psb30/Ycf12, peripheral proteins PsbO, CyanoQ (PsbQ), PsbU, PsbV and a large number of cofactors. It forms dimeric complexes.

Its subcellular location is the cellular thylakoid membrane. Functionally, one of the components of the core complex of photosystem II (PSII). PSII is a light-driven water:plastoquinone oxidoreductase that uses light energy to abstract electrons from H(2)O, generating O(2) and a proton gradient subsequently used for ATP formation. It consists of a core antenna complex that captures photons, and an electron transfer chain that converts photonic excitation into a charge separation. The chain is Photosystem II reaction center protein K from Prochlorococcus marinus (strain NATL2A).